Consider the following 206-residue polypeptide: Superoxide dismutase [Mn] (206 aa).

The Mn(2+) site is built by histidine 27, histidine 82, aspartate 168, and histidine 172.

Belongs to the iron/manganese superoxide dismutase family. In terms of assembly, homodimer. The cofactor is Mn(2+).

The catalysed reaction is 2 superoxide + 2 H(+) = H2O2 + O2. Its function is as follows. Destroys superoxide anion radicals which are normally produced within the cells and which are toxic to biological systems. The sequence is that of Superoxide dismutase [Mn] (sodA) from Salmonella typhi.